A 140-amino-acid polypeptide reads, in one-letter code: Oocyte-expressed protein homolog (140 aa).

Residues 40-101 form the KH; atypical domain; it reads PLVFFLEAWL…AVQRQVKSVL (62 aa).

This sequence belongs to the KHDC1 family. As to quaternary structure, component of the subcortical maternal complex (SCMC), at least composed of NLRP5, KHDC3, OOEP, and TLE6. Within the complex, interacts with NLRP5, KHDC3 and TLE6. As part of the SCMC interacts with the SCMC-associated protein NLRP4F. The SCMC may facilitate translocation of its components between the nuclear and cytoplasmic compartments. Forms a scaffold complex with KHDC3/FILIA, and interacts with BLM and TRIM25 at DNA replication forks.

The protein localises to the cytoplasm. It localises to the nucleus. In terms of biological role, component of the subcortical maternal complex (SCMC), a multiprotein complex that plays a key role in early embryonic development. The SCMC complex is a structural constituent of cytoplasmic lattices, which consist in fibrous structures found in the cytoplasm of oocytes and preimplantation embryos. They are required to store maternal proteins critical for embryonic development, such as proteins that control epigenetic reprogramming of the preimplantation embryo, and prevent their degradation or activation. As part of the OOEP-KHDC3 scaffold, recruits BLM and TRIM25 to DNA replication forks, thereby promoting the ubiquitination of BLM by TRIM25, enhancing BLM retainment at replication forks and therefore promoting stalled replication fork restart. Positively regulates the homologous recombination-mediated DNA double-strand break (DSB) repair pathway by regulating ATM activation and RAD51 recruitment to DSBs in oocytes. Thereby contributes to oocyte survival and the resumption and completion of meiosis. In Bos taurus (Bovine), this protein is Oocyte-expressed protein homolog (OOEP).